The following is a 350-amino-acid chain: [LysW]-L-2-aminoadipate/[LysW]-L-glutamate phosphate reductase (350 aa).

10–13 provides a ligand contact to NADP(+); that stretch reads SGYT. Residue Cys-150 is part of the active site. Residue Asn-317 coordinates NADP(+).

Belongs to the NAGSA dehydrogenase family. Type 1 subfamily. LysY sub-subfamily.

It is found in the cytoplasm. The enzyme catalyses [amino-group carrier protein]-C-terminal-N-(1-carboxy-5-oxopentan-1-yl)-L-glutamine + phosphate + NADP(+) = [amino-group carrier protein]-C-terminal-N-(1-carboxy-5-phosphooxy-5-oxopentan-1-yl)-L-glutamine + NADPH + H(+). The catalysed reaction is [amino-group carrier protein]-C-terminal-gamma-(L-glutamyl-5-semialdehyde)-L-glutamate + phosphate + NADP(+) = [amino-group carrier protein]-C-terminal-gamma-(5-phospho-L-glutamyl)-L-glutamate + NADPH + H(+). The protein operates within amino-acid biosynthesis; L-lysine biosynthesis via AAA pathway; L-lysine from L-alpha-aminoadipate (Thermus route): step 3/5. It functions in the pathway amino-acid biosynthesis; L-arginine biosynthesis. Involved in both the arginine and lysine biosynthetic pathways. The sequence is that of [LysW]-L-2-aminoadipate/[LysW]-L-glutamate phosphate reductase from Sulfolobus acidocaldarius (strain ATCC 33909 / DSM 639 / JCM 8929 / NBRC 15157 / NCIMB 11770).